We begin with the raw amino-acid sequence, 2299 residues long: Acetyl-CoA carboxylase dmxL1 (2299 aa).

Low complexity predominate over residues 21 to 39 (TSIPASVPASAPPSSSAPH). A disordered region spans residues 21 to 41 (TSIPASVPASAPPSSSAPHAA). A Biotin carboxylation domain is found at 75-583 (VITNVLIANN…TTGWLDELIT (509 aa)). The ATP-grasp 1 domain maps to 227–424 (QVAIDADGIV…LPAAQLQIAM (198 aa)). 258-315 (AKEIGFPVMIKASEGGGGKGIRKCEQEEGFEALYNAASSEIPGSPIFIMKLAGNARHL) contacts ATP. Glutamate 381, glutamate 395, and asparagine 397 together coordinate Mg(2+). Mn(2+)-binding residues include glutamate 381, glutamate 395, and asparagine 397. The 75-residue stretch at 710-784 (LEQENDPTQL…EPGDVLGILT (75 aa)) folds into the Biotinyl-binding domain. At lysine 751 the chain carries N6-biotinyllysine. Positions 1159 to 1208 (DMEMSSQLSTPSTPATPPTPPYENGKQSKGVGSISDMSNLIENPDKEPTR) are disordered. Residues 1539 to 1887 (PTKALEWLQP…KKNTLVPIGP (349 aa)) form the CoA carboxyltransferase N-terminal domain. The CoA carboxyltransferase C-terminal domain maps to 1891–2205 (PWDRDIVCSP…EEHILKRIAT (315 aa)).

It depends on biotin as a cofactor. The cofactor is Mg(2+). Mn(2+) is required as a cofactor.

It carries out the reaction hydrogencarbonate + acetyl-CoA + ATP = malonyl-CoA + ADP + phosphate + H(+). The enzyme catalyses N(6)-biotinyl-L-lysyl-[protein] + hydrogencarbonate + ATP = N(6)-carboxybiotinyl-L-lysyl-[protein] + ADP + phosphate + H(+). It participates in secondary metabolite biosynthesis. Its pathway is lipid metabolism; malonyl-CoA biosynthesis; malonyl-CoA from acetyl-CoA: step 1/1. In terms of biological role, acetyl-CoA carboxylase; part of the gene cluster that mediates the biosynthesis of the dimeric xanthones cryptosporioptides. The pathway begins with the synthesis of atrochrysone thioester by the polyketide synthase dmx-nrPKS. The atrochrysone carboxyl ACP thioesterase dmxR1 then breaks the thioester bond and releases the atrochrysone carboxylic acid from dmx-nrPKS. Atrochrysone carboxylic acid is decarboxylated by the decarboxylase dmxR15, and oxidized by the anthrone oxygenase dmxR16 to yield emodin. Emodin is then reduced to emodin hydroquinone by the oxidoreductase dmxR7. A-ring reduction by the short chain dehydrogenase dmxR18, dehydration by the scytalone dehydratase-like protein dmxR17 and probable spontaneous re-oxidation, results in overall deoxygenation to chrysophanol. Baeyer-Villiger oxidation by the Baeyer-Villiger monooxygenase (BVMO) dmxR6 then yields monodictylactone in equilibrium with monodictyphenone. In the case of the cryptosporioptides biosynthesis, monodictylactone is reduced at C-12 to an alcohol (by the short chain dehydrogenases dmxR12 or dmxR8) and hydroxylated at C-5 by dmxR9, yielding the electron-rich aromatic which could eliminate H(2)O to form the ortho-quinonemethide, followed by tautomerisation to paraquinone and complete the formal reduction to produce the 10-methylgroup. Conjugate addition of C-4a-OH to the resulting paraquinone by the monooxygenase dmxR10 then gives cyclohexadienone, which is then reduced at C-5 by the short chain dehydrogenase dmxR3 to give the dihydroxanthone. The 6,7-epoxide in the cryptosporioptides could be introduced by the cytochrome P450 monooxygenase dmxL3. The highly reducing PKS dmxL2 manufactures butyrate, which is further carboxylated by dmxL1 to form ethylmalonate. It is not yet clear whether the carboxylation occurs while the butyrate is attached to the ACP of dmxL2, but this unusual fungal metabolite could then be esterified to O-5 by the O-acetyltransferase dmxR13. Finally, dimerization performed by dmxR5 gives the observed dimers cryptosporioptides A, B and C as the final products of the pathway. The polypeptide is Acetyl-CoA carboxylase dmxL1 (Cryptosporiopsis sp. (strain 8999)).